The sequence spans 293 residues: Ribokinase (293 aa).

Residues 11-13, 39-43, and Glu139 contribute to the substrate site; these read SMD and GKGAN. ATP is bound by residues Asn183 and 210-215; that span reads TEGKQG. K(+) contacts are provided by Asp236 and Thr238. ATP is bound by residues 241–242 and Asn266; that span reads GD. Residue Asp242 participates in substrate binding. Asp242 acts as the Proton acceptor in catalysis. K(+) contacts are provided by Ser272, Ser275, and Gly277.

The protein belongs to the carbohydrate kinase PfkB family. Ribokinase subfamily. In terms of assembly, homodimer. Requires Mg(2+) as cofactor.

The protein localises to the cytoplasm. The enzyme catalyses D-ribose + ATP = D-ribose 5-phosphate + ADP + H(+). It participates in carbohydrate metabolism; D-ribose degradation; D-ribose 5-phosphate from beta-D-ribopyranose: step 2/2. Activated by a monovalent cation that binds near, but not in, the active site. The most likely occupant of the site in vivo is potassium. Ion binding induces a conformational change that may alter substrate affinity. Its function is as follows. Catalyzes the phosphorylation of ribose at O-5 in a reaction requiring ATP and magnesium. The resulting D-ribose-5-phosphate can then be used either for sythesis of nucleotides, histidine, and tryptophan, or as a component of the pentose phosphate pathway. The sequence is that of Ribokinase from Bacillus subtilis (strain 168).